A 274-amino-acid chain; its full sequence is 2,3,4,5-tetrahydropyridine-2,6-dicarboxylate N-succinyltransferase (274 aa).

This sequence belongs to the transferase hexapeptide repeat family.

Its subcellular location is the cytoplasm. The catalysed reaction is (S)-2,3,4,5-tetrahydrodipicolinate + succinyl-CoA + H2O = (S)-2-succinylamino-6-oxoheptanedioate + CoA. It functions in the pathway amino-acid biosynthesis; L-lysine biosynthesis via DAP pathway; LL-2,6-diaminopimelate from (S)-tetrahydrodipicolinate (succinylase route): step 1/3. This is 2,3,4,5-tetrahydropyridine-2,6-dicarboxylate N-succinyltransferase from Salmonella heidelberg (strain SL476).